An 88-amino-acid polypeptide reads, in one-letter code: Protein A19 homolog (88 aa).

The segment at 1-28 (MADSTAGAKKRKKRSTSATSTRKEPPTV) is disordered.

It belongs to the chordopoxvirinae A19 family.

The chain is Protein A19 homolog from Fowlpox virus (strain NVSL) (FPV).